A 424-amino-acid polypeptide reads, in one-letter code: MISRLFASNQNVKLVRTFKSTSISMAAEKKKFERTKPHVNVGTIGHVDHGKTTLTAAITKTLSDRGLANFKSYAQIDKSPEEKARGITITASHIEYESATRHYAHIDCPGHQHYIKNMITGAAQMDGAILVVSAPDGPQEQTREHIILSREVGIPALVVFLNKMDNADPDLVEIVEMEVRELLSQYGFNGDETPFVKGAAAVALAETNETATQYGRKAIDELVEVLDTKIPLPHRAVDKPFLMPVEEVFSISGRGTVATGRIEQGTLKVGEEVAIVGIKPVPKVAVTGIEMFGKLLDFAQAGENVGCLLRGLKREEVLRGEVISKPGTIKASTKFKAKTYVLTEAEGGRKKGFATGYRPQFFIRTANVTGMIELPPTHAVILPGDSLEFTVELISPTPLSINGRFAIREGQLTVGAGVISEILN.

The tr-type G domain occupies 36–234; it reads KPHVNVGTIG…VLDTKIPLPH (199 aa). The segment at 45-52 is G1; it reads GHVDHGKT. 45 to 52 lines the GTP pocket; the sequence is GHVDHGKT. Residues 86-90 form a G2 region; sequence GITIT. The interval 107-110 is G3; it reads DCPG. Residues 107-111 and 162-165 contribute to the GTP site; these read DCPGH and NKMD. The segment at 162 to 165 is G4; sequence NKMD. Residues 199–201 are G5; the sequence is AAA.

The protein belongs to the TRAFAC class translation factor GTPase superfamily. Classic translation factor GTPase family. EF-Tu/EF-1A subfamily.

The protein resides in the mitochondrion. Its function is as follows. This protein promotes the GTP-dependent binding of aminoacyl-tRNA to the A-site of ribosomes during protein biosynthesis. The sequence is that of Elongation factor Tu, mitochondrial (tufm) from Dictyostelium discoideum (Social amoeba).